Here is a 1596-residue protein sequence, read N- to C-terminus: A-kinase anchor protein SPHKAP (1596 aa).

Disordered regions lie at residues 214–233 (KHGRLAGQRAAEDDTNRSVS), 242–319 (ASEQ…TPKQ), 389–432 (DNSE…GHPA), 462–481 (SGEEYECEDEEEESETDQGE), and 760–809 (EQSD…SSSS). Over residues 292–306 (TLCTSSNSQKLSRTY) the composition is skewed to polar residues. Residues 462 to 479 (SGEEYECEDEEEESETDQ) are compositionally biased toward acidic residues. Positions 829 to 846 (FAEDLATTVVSMATELAA) are PKA-RII subunit binding domain. 3 disordered regions span residues 958–1022 (VVDT…ISKQ), 1282–1310 (VGERRHGFKHSRCNNSGNRPGVEHQENSC), and 1328–1443 (VPLI…SSLG). Polar residues predominate over residues 959-971 (VDTSKSGQSSRSR). The segment covering 1333–1356 (IEPDQREEASEEKGGVETHHREAS) has biased composition (basic and acidic residues). Positions 1357–1372 (HQTQQQSGKGSETATK) are enriched in polar residues. Composition is skewed to low complexity over residues 1398 to 1409 (LSASSEESGSGS) and 1430 to 1443 (LSEGNGNSSTSSLG).

The protein belongs to the AKAP110 family.

The protein localises to the cytoplasm. Anchoring protein that mediates the subcellular compartmentation of cAMP-dependent protein kinase (PKA type II). The chain is A-kinase anchor protein SPHKAP (sphkap) from Danio rerio (Zebrafish).